The chain runs to 466 residues: ATP synthase subunit beta (466 aa).

Residue 156–163 participates in ATP binding; that stretch reads GGAGVGKT.

It belongs to the ATPase alpha/beta chains family. F-type ATPases have 2 components, CF(1) - the catalytic core - and CF(0) - the membrane proton channel. CF(1) has five subunits: alpha(3), beta(3), gamma(1), delta(1), epsilon(1). CF(0) has three main subunits: a(1), b(2) and c(9-12). The alpha and beta chains form an alternating ring which encloses part of the gamma chain. CF(1) is attached to CF(0) by a central stalk formed by the gamma and epsilon chains, while a peripheral stalk is formed by the delta and b chains.

The protein localises to the cell membrane. It carries out the reaction ATP + H2O + 4 H(+)(in) = ADP + phosphate + 5 H(+)(out). Its function is as follows. Produces ATP from ADP in the presence of a proton gradient across the membrane. The catalytic sites are hosted primarily by the beta subunits. This Buchnera aphidicola subsp. Schizaphis graminum (strain Sg) protein is ATP synthase subunit beta.